The chain runs to 268 residues: Undecaprenyl-diphosphatase (268 aa).

7 helical membrane-spanning segments follow: residues 47–67 (FAIL…FFKL), 83–103 (FIIG…IAGK), 109–129 (LFDP…LLWV), 144–164 (YPLM…IPGV), 184–204 (AAEF…VYDF), 218–238 (LIAI…KAFL), and 246–266 (FVLF…ALAL).

The protein belongs to the UppP family.

Its subcellular location is the cell inner membrane. The enzyme catalyses di-trans,octa-cis-undecaprenyl diphosphate + H2O = di-trans,octa-cis-undecaprenyl phosphate + phosphate + H(+). Catalyzes the dephosphorylation of undecaprenyl diphosphate (UPP). Confers resistance to bacitracin. The chain is Undecaprenyl-diphosphatase from Bradyrhizobium sp. (strain ORS 278).